The primary structure comprises 498 residues: Type II secretion system protein E (498 aa).

Residues cysteine 394, cysteine 397, cysteine 425, and cysteine 428 each contribute to the Zn(2+) site.

It belongs to the GSP E family. Forms homooligomers; most probably hexamers. Interacts with OutL/GspL. Zn(2+) serves as cofactor.

The protein localises to the cell inner membrane. It carries out the reaction ATP + H2O + cellular proteinSide 1 = ADP + phosphate + cellular proteinSide 2.. In terms of biological role, ATPase component of the type II secretion system required for the energy-dependent secretion of extracellular factors such as proteases and toxins from the periplasm. Acts as a molecular motor to provide the energy that is required for assembly of the pseudopilus and the extrusion of substrates generated in the cytoplasm. In Dickeya dadantii (strain 3937) (Erwinia chrysanthemi (strain 3937)), this protein is Type II secretion system protein E (outE).